We begin with the raw amino-acid sequence, 417 residues long: Gamma-glutamyl phosphate reductase (417 aa).

Belongs to the gamma-glutamyl phosphate reductase family.

The protein localises to the cytoplasm. The catalysed reaction is L-glutamate 5-semialdehyde + phosphate + NADP(+) = L-glutamyl 5-phosphate + NADPH + H(+). It participates in amino-acid biosynthesis; L-proline biosynthesis; L-glutamate 5-semialdehyde from L-glutamate: step 2/2. In terms of biological role, catalyzes the NADPH-dependent reduction of L-glutamate 5-phosphate into L-glutamate 5-semialdehyde and phosphate. The product spontaneously undergoes cyclization to form 1-pyrroline-5-carboxylate. In Pectobacterium carotovorum subsp. carotovorum (strain PC1), this protein is Gamma-glutamyl phosphate reductase.